The sequence spans 373 residues: 3 beta-hydroxysteroid dehydrogenase/Delta 5--&gt;4-isomerase type 1 (373 aa).

NADP(+) is bound by residues 10-15 (GAGGFL), Tyr-155, and Lys-159. Lys-159 (proton donor) is an active-site residue. The chain crosses the membrane as a helical span at residues 288-308 (LALMYWIGFLLEVVSFLLSPV).

Belongs to the 3-beta-HSD family. As to expression, adrenal glands, testes and ovaries.

The protein resides in the endoplasmic reticulum membrane. It is found in the mitochondrion membrane. The catalysed reaction is a 3beta-hydroxy-Delta(5)-steroid + NAD(+) = a 3-oxo-Delta(5)-steroid + NADH + H(+). It carries out the reaction pregnenolone + NAD(+) = pregn-5-ene-3,20-dione + NADH + H(+). It catalyses the reaction 3beta-hydroxyandrost-5-en-17-one + NAD(+) = androst-5-ene-3,17-dione + NADH + H(+). The enzyme catalyses androst-5-en-3beta,17beta-diol + NAD(+) = 17beta-hydroxy-androst-5-en-3-one + NADH + H(+). The catalysed reaction is a 3beta-hydroxysteroid + NADP(+) = a 3-oxosteroid + NADPH + H(+). It carries out the reaction 5alpha-androstane-3beta,17beta-diol + NADP(+) = 17beta-hydroxy-5alpha-androstan-3-one + NADPH + H(+). It catalyses the reaction 3beta-hydroxy-5alpha-androstan-17-one + NADP(+) = 5alpha-androstan-3,17-dione + NADPH + H(+). The enzyme catalyses a 3-oxo-Delta(5)-steroid = a 3-oxo-Delta(4)-steroid. The catalysed reaction is pregn-5-ene-3,20-dione = progesterone. It carries out the reaction androst-5-ene-3,17-dione = androst-4-ene-3,17-dione. It catalyses the reaction 17beta-hydroxy-androst-5-en-3-one = testosterone. The enzyme catalyses 5alpha-androstane-3beta,17beta-diol + NAD(+) = 17beta-hydroxy-5alpha-androstan-3-one + NADH + H(+). The protein operates within steroid hormone biosynthesis. Its pathway is steroid metabolism. Its function is as follows. A bifunctional enzyme responsible for the oxidation and isomerization of 3beta-hydroxy-Delta(5)-steroid precursors to 3-oxo-Delta(4)-steroids, an essential step in steroid hormone biosynthesis. Specifically catalyzes the conversion of pregnenolone to progesterone, 17alpha-hydroxypregnenolone to 17alpha-hydroxyprogesterone, dehydroepiandrosterone (DHEA) to 4-androstenedione and androstenediol to testosterone. Additionally, catalyzes the interconversion between 3beta-hydroxy and 3-oxo-5alpha-androstane steroids controlling the bioavalability of the active forms. Specifically converts dihydrotestosterone to its inactive form 5alpha-androstanediol, that does not bind androgen receptor/AR. Also converts androstanedione, a precursor of testosterone and estrone, to epiandrosterone. Expected to use NAD(+) as preferred electron donor for the 3beta-hydroxy-steroid dehydrogenase activity and NADPH for the 3-ketosteroid reductase activity. The sequence is that of 3 beta-hydroxysteroid dehydrogenase/Delta 5--&gt;4-isomerase type 1 (HSD3B1) from Macaca mulatta (Rhesus macaque).